A 170-amino-acid polypeptide reads, in one-letter code: Small ribosomal subunit protein mS41 (170 aa).

A mitochondrion-targeting transit peptide spans 1-20; it reads MFRTLLSSTVRSIQLKPVTS.

It belongs to the mitochondrion-specific ribosomal protein mS41 family. As to quaternary structure, component of the mitochondrial small ribosomal subunit (mt-SSU).

The protein localises to the mitochondrion. In terms of biological role, component of the mitochondrial ribosome (mitoribosome), a dedicated translation machinery responsible for the synthesis of mitochondrial genome-encoded proteins, including at least some of the essential transmembrane subunits of the mitochondrial respiratory chain. The mitoribosomes are attached to the mitochondrial inner membrane and translation products are cotranslationally integrated into the membrane. mS41 is involved in telomere length regulation. The chain is Small ribosomal subunit protein mS41 (FYV4) from Candida albicans (strain SC5314 / ATCC MYA-2876) (Yeast).